A 704-amino-acid polypeptide reads, in one-letter code: Elongation factor G (704 aa).

The region spanning 8–290 is the tr-type G domain; it reads ARYRNIGISA…AVIDYLPSPV (283 aa). Residues 17-24, 88-92, and 142-145 contribute to the GTP site; these read AHIDAGKT, DTPGH, and NKMD.

Belongs to the TRAFAC class translation factor GTPase superfamily. Classic translation factor GTPase family. EF-G/EF-2 subfamily.

The protein resides in the cytoplasm. Catalyzes the GTP-dependent ribosomal translocation step during translation elongation. During this step, the ribosome changes from the pre-translocational (PRE) to the post-translocational (POST) state as the newly formed A-site-bound peptidyl-tRNA and P-site-bound deacylated tRNA move to the P and E sites, respectively. Catalyzes the coordinated movement of the two tRNA molecules, the mRNA and conformational changes in the ribosome. This is Elongation factor G from Cronobacter sakazakii (strain ATCC BAA-894) (Enterobacter sakazakii).